A 326-amino-acid polypeptide reads, in one-letter code: GTP 3',8-cyclase (326 aa).

A Radical SAM core domain is found at 4–227 (KHERNINYMR…LTPQKNILGN (224 aa)). Arginine 13 is a binding site for GTP. [4Fe-4S] cluster is bound by residues cysteine 20 and cysteine 24. Tyrosine 26 provides a ligand contact to S-adenosyl-L-methionine. A [4Fe-4S] cluster-binding site is contributed by cysteine 27. Arginine 63 serves as a coordination point for GTP. Glycine 67 provides a ligand contact to S-adenosyl-L-methionine. Threonine 94 is a GTP binding site. An S-adenosyl-L-methionine-binding site is contributed by serine 118. Lysine 155 lines the GTP pocket. Methionine 189 is a binding site for S-adenosyl-L-methionine. Residues cysteine 253 and cysteine 256 each contribute to the [4Fe-4S] cluster site. 258 to 260 (RIR) is a binding site for GTP. Cysteine 270 serves as a coordination point for [4Fe-4S] cluster.

It belongs to the radical SAM superfamily. MoaA family. As to quaternary structure, monomer and homodimer. Requires [4Fe-4S] cluster as cofactor.

It catalyses the reaction GTP + AH2 + S-adenosyl-L-methionine = (8S)-3',8-cyclo-7,8-dihydroguanosine 5'-triphosphate + 5'-deoxyadenosine + L-methionine + A + H(+). The protein operates within cofactor biosynthesis; molybdopterin biosynthesis. Functionally, catalyzes the cyclization of GTP to (8S)-3',8-cyclo-7,8-dihydroguanosine 5'-triphosphate. The chain is GTP 3',8-cyclase from Syntrophomonas wolfei subsp. wolfei (strain DSM 2245B / Goettingen).